Consider the following 88-residue polypeptide: Small ribosomal subunit protein uS12 (88 aa).

The tract at residues 1 to 24 (RKGRRDKIGKVKTAALKGSPQRRG) is disordered. A 3-methylthioaspartic acid modification is found at Asp-81.

It belongs to the universal ribosomal protein uS12 family. In terms of assembly, part of the 30S ribosomal subunit. Contacts proteins S8 and S17. May interact with IF1 in the 30S initiation complex.

Functionally, with S4 and S5 plays an important role in translational accuracy. Interacts with and stabilizes bases of the 16S rRNA that are involved in tRNA selection in the A site and with the mRNA backbone. Located at the interface of the 30S and 50S subunits, it traverses the body of the 30S subunit contacting proteins on the other side and probably holding the rRNA structure together. The combined cluster of proteins S8, S12 and S17 appears to hold together the shoulder and platform of the 30S subunit. This Mycobacterium szulgai protein is Small ribosomal subunit protein uS12 (rpsL).